A 184-amino-acid polypeptide reads, in one-letter code: ATP synthase subunit b, chloroplastic (184 aa).

The helical transmembrane segment at Leu-27–Leu-49 threads the bilayer.

It belongs to the ATPase B chain family. F-type ATPases have 2 components, F(1) - the catalytic core - and F(0) - the membrane proton channel. F(1) has five subunits: alpha(3), beta(3), gamma(1), delta(1), epsilon(1). F(0) has four main subunits: a(1), b(1), b'(1) and c(10-14). The alpha and beta chains form an alternating ring which encloses part of the gamma chain. F(1) is attached to F(0) by a central stalk formed by the gamma and epsilon chains, while a peripheral stalk is formed by the delta, b and b' chains.

The protein localises to the plastid. Its subcellular location is the chloroplast thylakoid membrane. In terms of biological role, f(1)F(0) ATP synthase produces ATP from ADP in the presence of a proton or sodium gradient. F-type ATPases consist of two structural domains, F(1) containing the extramembraneous catalytic core and F(0) containing the membrane proton channel, linked together by a central stalk and a peripheral stalk. During catalysis, ATP synthesis in the catalytic domain of F(1) is coupled via a rotary mechanism of the central stalk subunits to proton translocation. Functionally, component of the F(0) channel, it forms part of the peripheral stalk, linking F(1) to F(0). In Oenothera argillicola (Appalachian evening primrose), this protein is ATP synthase subunit b, chloroplastic.